Reading from the N-terminus, the 85-residue chain is LYR motif-containing protein 5A (85 aa).

It belongs to the complex I LYR family.

The chain is LYR motif-containing protein 5A (lyrm5a) from Danio rerio (Zebrafish).